A 700-amino-acid polypeptide reads, in one-letter code: Elongation factor G (700 aa).

The region spanning 10 to 285 is the tr-type G domain; sequence DRTRNIGIMA…AVIDYLPSPL (276 aa). GTP is bound by residues 19 to 26, 83 to 87, and 137 to 140; these read AHIDAGKT, DTPGH, and NKMD.

The protein belongs to the TRAFAC class translation factor GTPase superfamily. Classic translation factor GTPase family. EF-G/EF-2 subfamily.

It localises to the cytoplasm. Catalyzes the GTP-dependent ribosomal translocation step during translation elongation. During this step, the ribosome changes from the pre-translocational (PRE) to the post-translocational (POST) state as the newly formed A-site-bound peptidyl-tRNA and P-site-bound deacylated tRNA move to the P and E sites, respectively. Catalyzes the coordinated movement of the two tRNA molecules, the mRNA and conformational changes in the ribosome. This is Elongation factor G from Lacticaseibacillus paracasei (strain ATCC 334 / BCRC 17002 / CCUG 31169 / CIP 107868 / KCTC 3260 / NRRL B-441) (Lactobacillus paracasei).